The sequence spans 327 residues: GTPase Obg (327 aa).

The Obg domain occupies 3–160; the sequence is NKFTDFIKIY…FIFVLELKIL (158 aa). The OBG-type G domain occupies 161-327; sequence ADVGLIGLPN…LIYYICNILS (167 aa). GTP is bound by residues 167 to 174, 192 to 196, 214 to 217, 281 to 284, and 308 to 310; these read GLPNSGKS, FTTLN, DIPG, SKSD, and SSF. Residues serine 174 and threonine 194 each contribute to the Mg(2+) site.

The protein belongs to the TRAFAC class OBG-HflX-like GTPase superfamily. OBG GTPase family. In terms of assembly, monomer. Mg(2+) serves as cofactor.

The protein resides in the cytoplasm. In terms of biological role, an essential GTPase which binds GTP, GDP and possibly (p)ppGpp with moderate affinity, with high nucleotide exchange rates and a fairly low GTP hydrolysis rate. Plays a role in control of the cell cycle, stress response, ribosome biogenesis and in those bacteria that undergo differentiation, in morphogenesis control. This chain is GTPase Obg, found in Karelsulcia muelleri (strain GWSS) (Sulcia muelleri).